Here is a 425-residue protein sequence, read N- to C-terminus: 3-phosphoshikimate 1-carboxyvinyltransferase (425 aa).

The 3-phosphoshikimate site is built by Lys-20, Ser-21, and Arg-25. Lys-20 serves as a coordination point for phosphoenolpyruvate. Phosphoenolpyruvate contacts are provided by Gly-92 and Arg-120. Residues Ser-165, Gln-167, Asp-312, and Lys-339 each coordinate 3-phosphoshikimate. Gln-167 is a binding site for phosphoenolpyruvate. Catalysis depends on Asp-312, which acts as the Proton acceptor. The phosphoenolpyruvate site is built by Arg-343 and Arg-385.

The protein belongs to the EPSP synthase family. Monomer.

It localises to the cytoplasm. The enzyme catalyses 3-phosphoshikimate + phosphoenolpyruvate = 5-O-(1-carboxyvinyl)-3-phosphoshikimate + phosphate. It functions in the pathway metabolic intermediate biosynthesis; chorismate biosynthesis; chorismate from D-erythrose 4-phosphate and phosphoenolpyruvate: step 6/7. Functionally, catalyzes the transfer of the enolpyruvyl moiety of phosphoenolpyruvate (PEP) to the 5-hydroxyl of shikimate-3-phosphate (S3P) to produce enolpyruvyl shikimate-3-phosphate and inorganic phosphate. The chain is 3-phosphoshikimate 1-carboxyvinyltransferase from Alkaliphilus metalliredigens (strain QYMF).